Consider the following 560-residue polypeptide: Calnexin homolog (560 aa).

An N-terminal signal peptide occupies residues 1–22 (MKYGKVSFLALLCSLYVRGSLA). The Lumenal portion of the chain corresponds to 23–489 (DPESEQEPLV…ETIIETPEIG (467 aa)). A disulfide bridge connects residues C132 and C163. An alpha-D-glucoside contacts are provided by Y136, K138, Y154, and D161. The interval 242–375 (IYDPEDIKPA…RKIPNPDYFD (134 aa)) is p domain (Extended arm). Tandem repeats lie at residues 244–255 (DPEDIKPADWVD), 261–272 (DPNAVKPDDWDE), 280–291 (DPDAVKPEDWLE), 299–310 (DPEAQKPEDWDD), and 314–324 (GDWIPSEIINP). 2 4 X approximate repeats regions span residues 244–310 (DPED…DWDD) and 314–371 (GDWI…IPNP). The disordered stretch occupies residues 253 to 273 (WVDEPEIPDPNAVKPDDWDED). A disulfide bridge connects residues C326 and C332. 3 consecutive repeat copies span residues 333-343 (GEWKPPMIRNP), 347-357 (GPWSPPMIPNP), and 361-371 (GEWYPRKIPNP). E391 lines the an alpha-D-glucoside pocket. N418 is a glycosylation site (N-linked (GlcNAc...) asparagine). A helical membrane pass occupies residues 490-512 (IAIVAVLGSLTAVILTCYFYFFA). The Cytoplasmic portion of the chain corresponds to 513–560 (SSSPASLSTGTTEAEKEQQEKFKQETETEKIDVSYAPETESPTAKNED). Positions 517-560 (ASLSTGTTEAEKEQQEKFKQETETEKIDVSYAPETESPTAKNED) are disordered. Basic and acidic residues predominate over residues 525–544 (EAEKEQQEKFKQETETEKID). T551 carries the post-translational modification Phosphothreonine. Phosphoserine is present on S553. T555 is modified (phosphothreonine).

It belongs to the calreticulin family.

The protein resides in the endoplasmic reticulum membrane. Calcium-binding protein that interacts with newly synthesized monoglucosylated glycoproteins in the endoplasmic reticulum. It may act in assisting protein assembly and/or in the retention within the ER of unassembled protein subunits. It seems to play a major role in the quality control apparatus of the ER by the retention of incorrectly folded proteins. This Schizosaccharomyces pombe (strain 972 / ATCC 24843) (Fission yeast) protein is Calnexin homolog (cal1).